The primary structure comprises 100 residues: Small ribosomal subunit protein uS14c (100 aa).

This sequence belongs to the universal ribosomal protein uS14 family. As to quaternary structure, part of the 30S ribosomal subunit.

The protein localises to the plastid. It is found in the chloroplast. In terms of biological role, binds 16S rRNA, required for the assembly of 30S particles. In Psilotum nudum (Whisk fern), this protein is Small ribosomal subunit protein uS14c.